Reading from the N-terminus, the 475-residue chain is 3-isopropylmalate dehydratase large subunit (475 aa).

3 residues coordinate [4Fe-4S] cluster: Cys-349, Cys-409, and Cys-412.

It belongs to the aconitase/IPM isomerase family. LeuC type 1 subfamily. In terms of assembly, heterodimer of LeuC and LeuD. The cofactor is [4Fe-4S] cluster.

It carries out the reaction (2R,3S)-3-isopropylmalate = (2S)-2-isopropylmalate. It participates in amino-acid biosynthesis; L-leucine biosynthesis; L-leucine from 3-methyl-2-oxobutanoate: step 2/4. Functionally, catalyzes the isomerization between 2-isopropylmalate and 3-isopropylmalate, via the formation of 2-isopropylmaleate. The chain is 3-isopropylmalate dehydratase large subunit from Cereibacter sphaeroides (strain ATCC 17029 / ATH 2.4.9) (Rhodobacter sphaeroides).